Here is a 251-residue protein sequence, read N- to C-terminus: 3-dehydroquinate dehydratase (251 aa).

3-dehydroquinate contacts are provided by residues 47–49 (EWR) and Arg-83. The active-site Proton donor/acceptor is the His-144. Lys-171 (schiff-base intermediate with substrate) is an active-site residue. Residues Arg-214, Ser-233, and Gln-237 each contribute to the 3-dehydroquinate site.

The protein belongs to the type-I 3-dehydroquinase family. In terms of assembly, homodimer.

It carries out the reaction 3-dehydroquinate = 3-dehydroshikimate + H2O. The protein operates within metabolic intermediate biosynthesis; chorismate biosynthesis; chorismate from D-erythrose 4-phosphate and phosphoenolpyruvate: step 3/7. Involved in the third step of the chorismate pathway, which leads to the biosynthesis of aromatic amino acids. Catalyzes the cis-dehydration of 3-dehydroquinate (DHQ) and introduces the first double bond of the aromatic ring to yield 3-dehydroshikimate. This is 3-dehydroquinate dehydratase from Klebsiella pneumoniae subsp. pneumoniae (strain ATCC 700721 / MGH 78578).